The primary structure comprises 456 residues: Bifunctional protein GlmU (456 aa).

The pyrophosphorylase stretch occupies residues 1-229 (MLNNAMSVVI…LSEVEGVNNR (229 aa)). Residues 11–14 (LAAG), Lys25, Gln76, 81–82 (GT), 103–105 (YGD), Gly140, Glu154, Asn169, and Asn227 each bind UDP-N-acetyl-alpha-D-glucosamine. Asp105 serves as a coordination point for Mg(2+). A Mg(2+)-binding site is contributed by Asn227. Positions 230–250 (LQLSRLERVYQSEQAEKLLLA) are linker. Positions 251–456 (GVMLRDPARF…EGWRRPVKKK (206 aa)) are N-acetyltransferase. Residues Arg333 and Lys351 each contribute to the UDP-N-acetyl-alpha-D-glucosamine site. The Proton acceptor role is filled by His363. Tyr366 and Asn377 together coordinate UDP-N-acetyl-alpha-D-glucosamine. Residues Ala380, 386–387 (NY), Ser405, Ala423, and Arg440 contribute to the acetyl-CoA site.

The protein in the N-terminal section; belongs to the N-acetylglucosamine-1-phosphate uridyltransferase family. This sequence in the C-terminal section; belongs to the transferase hexapeptide repeat family. Homotrimer. Mg(2+) serves as cofactor.

Its subcellular location is the cytoplasm. The catalysed reaction is alpha-D-glucosamine 1-phosphate + acetyl-CoA = N-acetyl-alpha-D-glucosamine 1-phosphate + CoA + H(+). It catalyses the reaction N-acetyl-alpha-D-glucosamine 1-phosphate + UTP + H(+) = UDP-N-acetyl-alpha-D-glucosamine + diphosphate. It participates in nucleotide-sugar biosynthesis; UDP-N-acetyl-alpha-D-glucosamine biosynthesis; N-acetyl-alpha-D-glucosamine 1-phosphate from alpha-D-glucosamine 6-phosphate (route II): step 2/2. Its pathway is nucleotide-sugar biosynthesis; UDP-N-acetyl-alpha-D-glucosamine biosynthesis; UDP-N-acetyl-alpha-D-glucosamine from N-acetyl-alpha-D-glucosamine 1-phosphate: step 1/1. It functions in the pathway bacterial outer membrane biogenesis; LPS lipid A biosynthesis. Functionally, catalyzes the last two sequential reactions in the de novo biosynthetic pathway for UDP-N-acetylglucosamine (UDP-GlcNAc). The C-terminal domain catalyzes the transfer of acetyl group from acetyl coenzyme A to glucosamine-1-phosphate (GlcN-1-P) to produce N-acetylglucosamine-1-phosphate (GlcNAc-1-P), which is converted into UDP-GlcNAc by the transfer of uridine 5-monophosphate (from uridine 5-triphosphate), a reaction catalyzed by the N-terminal domain. The chain is Bifunctional protein GlmU from Shigella boydii serotype 18 (strain CDC 3083-94 / BS512).